Here is a 335-residue protein sequence, read N- to C-terminus: Beta-ketoacyl-[acyl-carrier-protein] synthase III (335 aa).

Residues C119 and H261 contribute to the active site. The tract at residues Q262–R266 is ACP-binding. Residue N291 is part of the active site.

The protein belongs to the thiolase-like superfamily. FabH family. Homodimer.

The protein resides in the cytoplasm. It carries out the reaction malonyl-[ACP] + acetyl-CoA + H(+) = 3-oxobutanoyl-[ACP] + CO2 + CoA. The protein operates within lipid metabolism; fatty acid biosynthesis. Functionally, catalyzes the condensation reaction of fatty acid synthesis by the addition to an acyl acceptor of two carbons from malonyl-ACP. Catalyzes the first condensation reaction which initiates fatty acid synthesis and may therefore play a role in governing the total rate of fatty acid production. Possesses both acetoacetyl-ACP synthase and acetyl transacylase activities. Its substrate specificity determines the biosynthesis of branched-chain and/or straight-chain of fatty acids. In Prochlorococcus marinus (strain MIT 9515), this protein is Beta-ketoacyl-[acyl-carrier-protein] synthase III.